A 510-amino-acid chain; its full sequence is NAD(P)H-quinone oxidoreductase subunit 2, chloroplastic (510 aa).

12 consecutive transmembrane segments (helical) span residues 24–44 (LLLF…GLIL), 59–79 (WFYF…LFRW), 99–119 (IFQF…VEYI), 124–144 (MAIT…MFLC), 149–169 (LITI…LSGY), 183–203 (YLLM…WLYG), 229–249 (ISIA…PAPF), 295–315 (WHLL…LIAI), 323–343 (MLAY…IVGD), 354–374 (YMLF…LFGL), 395–415 (ALSS…AGFF), and 418–438 (LYLF…IGLL).

This sequence belongs to the complex I subunit 2 family. NDH is composed of at least 16 different subunits, 5 of which are encoded in the nucleus.

It localises to the plastid. It is found in the chloroplast thylakoid membrane. It catalyses the reaction a plastoquinone + NADH + (n+1) H(+)(in) = a plastoquinol + NAD(+) + n H(+)(out). The catalysed reaction is a plastoquinone + NADPH + (n+1) H(+)(in) = a plastoquinol + NADP(+) + n H(+)(out). In terms of biological role, NDH shuttles electrons from NAD(P)H:plastoquinone, via FMN and iron-sulfur (Fe-S) centers, to quinones in the photosynthetic chain and possibly in a chloroplast respiratory chain. The immediate electron acceptor for the enzyme in this species is believed to be plastoquinone. Couples the redox reaction to proton translocation, and thus conserves the redox energy in a proton gradient. The polypeptide is NAD(P)H-quinone oxidoreductase subunit 2, chloroplastic (Ananas comosus (Pineapple)).